We begin with the raw amino-acid sequence, 504 residues long: Protein Dok-7 (504 aa).

In terms of domain architecture, PH spans 4–109 (AALVEGQVKL…WDARIRYALG (106 aa)). An IRS-type PTB domain is found at 105 to 210 (RYALGEVHRF…RGISPTKGPF (106 aa)). Disordered regions lie at residues 210–229 (FGLR…TVEE), 249–351 (SHAG…YSSS), and 411–483 (LCLA…PHAG). 2 stretches are compositionally biased toward low complexity: residues 263–279 (LSSS…SASS) and 288–310 (SSSS…AGEA). Over residues 331 to 341 (GRQSSSDSGIA) the composition is skewed to polar residues.

In terms of assembly, homodimer. Forms a heterotetramer composed of 2 DOK7 and 2 MUSK molecules which facilitates MUSK trans-autophosphorylation on tyrosine residue and activation. Interacts (via IRS-type PTB domain) with MUSK (via cytoplasmic part); requires MUSK phosphorylation. In terms of tissue distribution, preferentially expressed in skeletal muscle and heart. Present in thigh muscle, diaphragm and heart but not in the liver or spleen (at protein level).

It is found in the cell membrane. The protein resides in the synapse. Its function is as follows. Probable muscle-intrinsic activator of MUSK that plays an essential role in neuromuscular synaptogenesis. Acts in aneural activation of MUSK and subsequent acetylcholine receptor (AchR) clustering in myotubes. Induces autophosphorylation of MUSK. This chain is Protein Dok-7 (DOK7), found in Homo sapiens (Human).